Reading from the N-terminus, the 112-residue chain is Small ribosomal subunit protein bS16 (112 aa).

This sequence belongs to the bacterial ribosomal protein bS16 family.

The polypeptide is Small ribosomal subunit protein bS16 (Aquifex aeolicus (strain VF5)).